A 320-amino-acid polypeptide reads, in one-letter code: Zinc finger protein 330 (320 aa).

The interval 1–23 is disordered; sequence MPKKKTGARKKAENRREREKQLR. The Nuclear localization signal motif lies at 3-11; the sequence is KKKTGARKK. The span at 10–22 shows a compositional bias: basic and acidic residues; sequence KKAENRREREKQL. 4 consecutive C4-type zinc fingers follow at residues 42-58, 67-104, 129-149, and 175-189; these read CDKC…CYFC, CAQC…CDFC, CVEC…CSFC, and CVSC…CLRC. A disordered region spans residues 206–320; it reads EKGKQPPCPK…GYAHYEEQEN (115 aa). The segment covering 216 to 225 has biased composition (basic and acidic residues); it reads CGHETQETKD. Residues 269–285 show a composition bias toward acidic residues; that stretch reads DEEEDEYEAEDDEEEED. The residue at position 291 (Ser291) is a Phosphoserine.

Belongs to the NOA36 family. Widely expressed. Higher expression seen in heart and skeletal muscle.

Its subcellular location is the nucleus. The protein localises to the nucleolus. The protein resides in the chromosome. It localises to the centromere. In Homo sapiens (Human), this protein is Zinc finger protein 330 (ZNF330).